Here is a 91-residue protein sequence, read N- to C-terminus: Defensin-like protein 269 (91 aa).

Residues 1-25 (MAVSKTTMLIVLVAIILSCVSISNA) form the signal peptide. Disulfide bonds link Cys-41-Cys-82, Cys-53-Cys-72, Cys-59-Cys-77, and Cys-63-Cys-79.

It belongs to the DEFL family.

The protein localises to the secreted. The protein is Defensin-like protein 269 of Arabidopsis thaliana (Mouse-ear cress).